The sequence spans 168 residues: uncharacterized protein (168 aa).

The next 5 membrane-spanning stretches (helical) occupy residues 15–33, 41–57, 73–93, 108–128, and 129–149; these read YLTVIIYRTGFVIAALAVL, LSLTFILIAATCCASSL, WIGLLFYINHYPALALGGALL, VPLLNLQPIFVACLWFSWVLN, and NLIALRIFSIISGVLLLVLAI.

It is found in the cell membrane. This is an uncharacterized protein from Haemophilus influenzae (strain ATCC 51907 / DSM 11121 / KW20 / Rd).